Consider the following 1257-residue polypeptide: Period circadian protein homolog 2 (1257 aa).

The segment at 1–60 is disordered; the sequence is MNGYVDFSPSPTSPTKEPGAPQPTQAVLQEDVDMSSGSSGNENCSTGRDSQGSDCDDNGK. Residues 35 to 53 show a composition bias toward polar residues; it reads SSGSSGNENCSTGRDSQGS. A Nuclear export signal 1 motif is present at residues 109 to 118; that stretch reads LIRTLKELKV. The PAS 1 domain occupies 179–246; that stretch reads ITSEYIVKNA…FHSYTTPYKL (68 aa). Residues 306–310 carry the LXXLL motif; the sequence is LCCLL. Residues 319–385 enclose the PAS 2 domain; the sequence is YEAPRIPPEK…MLAIHKKILQ (67 aa). One can recognise a PAC domain in the interval 393–436; it reads YSPIRFRTRNGEYITLDTSWSSFINPWSRKISFIIGRHKVRVGP. The Nuclear export signal 2 signature appears at 460–469; the sequence is LTEQIHRLLM. 2 disordered regions span residues 471-565 and 617-638; these read PVPH…GASL and PSRKATVSPGLHSGEAARPSKV. The tract at residues 478-482 is important for protein stability; sequence SGYGS. The span at 493-504 shows a compositional bias: polar residues; that stretch reads MSQTSSSDSNGQ. A CSNK1E binding domain region spans residues 510–709; it reads RRSGIFKTSG…GAAGGLSQEK (200 aa). Phosphoserine is present on residues serine 525, serine 528, serine 531, serine 538, and serine 544. The residue at position 554 (threonine 554) is a Phosphothreonine. 6 positions are modified to phosphoserine: serine 659, serine 693, serine 697, serine 706, serine 758, and serine 763. A disordered region spans residues 757 to 832; sequence RSRAQASDRG…SDTSQSSCPS (76 aa). The Nuclear localization signal signature appears at 778–794; that stretch reads KKTGKNRKLKSKRVKTR. The span at 779–792 shows a compositional bias: basic residues; the sequence is KTGKNRKLKSKRVK. Positions 821 to 832 are enriched in low complexity; sequence SPSDTSQSSCPS. Position 858 is a phosphothreonine (threonine 858). Residues 882-1067 are interaction with PPARG; it reads EFAVQPLPFA…DLCSATGSAL (186 aa). The residue at position 939 (serine 939) is a Phosphoserine. Position 964 is a phosphothreonine (threonine 964). Serine 971 carries the post-translational modification Phosphoserine. A Nuclear export signal 3 motif is present at residues 983–990; it reads LQLNLLQL. A disordered region spans residues 994–1044; it reads PEGSTGAAGTLGTTGTAASGLDCTSGTSRDRQPKAPPTCNEPSDTQNSDAI. Low complexity predominate over residues 996 to 1014; that stretch reads GSTGAAGTLGTTGTAASGL. Positions 1033–1044 are enriched in polar residues; sequence NEPSDTQNSDAI. The LXXLL signature appears at 1051-1055; sequence LNLLL. Low complexity predominate over residues 1070 to 1092; that stretch reads SGASATSDSLGSSSLGFGTSQSG. A disordered region spans residues 1070–1115; that stretch reads SGASATSDSLGSSSLGFGTSQSGAGSSDTSHTSKYFGSIDSSENNH. Positions 1093–1111 are enriched in polar residues; sequence AGSSDTSHTSKYFGSIDSS. Position 1126 is a phosphoserine (serine 1126). The segment at 1157–1257 is CRY binding domain; that stretch reads SRDLQAVLKE…LTGPRIEAQT (101 aa). The tract at residues 1224 to 1257 is disordered; that stretch reads PYEEDSPSPGLCDTSEAKEEEGEQLTGPRIEAQT.

Homodimer. Component of the circadian core oscillator, which includes the CRY proteins, CLOCK or NPAS2, BMAL1 or BMAL2, CSNK1D and/or CSNK1E, TIMELESS, and the PER proteins. Interacts with CLOCK-BMAL1 (off DNA). Interacts with BMAL2. Interacts directly with PER1 and PER3, and through a C-terminal domain, with CRY1 and CRY2. Interacts (via PAS 2 domain) with TIMELESS. Interacts with NFIL3. Different large complexes have been identified with different repressive functions. The core of PER complexes is composed of at least PER1, PER2, PER3, CRY1, CRY2, CSNK1D and/or CSNK1E. The large PER complex involved in the repression of transcriptional termination is composed of at least PER2, CDK9, DDX5, DHX9, NCBP1 and POLR2A (active). The large PER complex involved in the histone deacetylation is composed of at least HDAC1, PER2, SFPQ and SIN3A. The large PER complex involved in the histone methylation is composed of at least PER2, CBX3, TRIM28, SUV39H1 and/or SUV39H2; CBX3 mediates the formation of the complex. Interacts with SETX; the interaction inhibits termination of circadian target genes. Interacts with the nuclear receptors HNF4A, NR1D1, NR4A2, RORA, PPARA, PPARG and THRA; the interaction with at least PPARG is ligand dependent. Interacts with PML. Interacts (phosphorylated) with BTRC and FBXW11; the interactions trigger proteasomal degradation. Interacts with NONO and SFPQ. Interacts with CAVIN3. Interacts with MAGEL2. Interacts with MAP1LC3B. Interacts with HNF4A. Post-translationally, acetylated. Deacetylated by SIRT1, resulting in decreased protein stability. Deacetylated by SIRT6, preventing its degradation by the proteasome, resulting in increased protein stability. Phosphorylated by CSNK1E and CSNK1D. Phosphorylation results in PER2 protein degradation. May be dephosphorylated by PP1. In terms of processing, ubiquitinated, leading to its proteasomal degradation. Ubiquitination may be inhibited by CRY1. As to expression, in the brain, high expression in SCN during the subjective day. Constitutive expression in the cornu ammonis and in the dentate gyrus of the hippocampus. Also expressed in the piriform cortex and the glomeruli of the olfactory bulb, and at a lower extent in the cerebral cortex. Not expressed in the pars tuberalis and the Purkinje neurons. Also expressed in adipose tissue (white and brown), heart, kidney, bladder, lumbar spinal cord, skeletal muscle, spleen, lung, pancreas and liver with highest levels in skeletal muscle and liver and lowest levels in spleen.

It is found in the nucleus. Its subcellular location is the cytoplasm. The protein localises to the perinuclear region. Functionally, transcriptional repressor which forms a core component of the circadian clock. The circadian clock, an internal time-keeping system, regulates various physiological processes through the generation of approximately 24 hour circadian rhythms in gene expression, which are translated into rhythms in metabolism and behavior. It is derived from the Latin roots 'circa' (about) and 'diem' (day) and acts as an important regulator of a wide array of physiological functions including metabolism, sleep, body temperature, blood pressure, endocrine, immune, cardiovascular, and renal function. Consists of two major components: the central clock, residing in the suprachiasmatic nucleus (SCN) of the brain, and the peripheral clocks that are present in nearly every tissue and organ system. Both the central and peripheral clocks can be reset by environmental cues, also known as Zeitgebers (German for 'timegivers'). The predominant Zeitgeber for the central clock is light, which is sensed by retina and signals directly to the SCN. The central clock entrains the peripheral clocks through neuronal and hormonal signals, body temperature and feeding-related cues, aligning all clocks with the external light/dark cycle. Circadian rhythms allow an organism to achieve temporal homeostasis with its environment at the molecular level by regulating gene expression to create a peak of protein expression once every 24 hours to control when a particular physiological process is most active with respect to the solar day. Transcription and translation of core clock components (CLOCK, NPAS2, BMAL1, BMAL2, PER1, PER2, PER3, CRY1 and CRY2) plays a critical role in rhythm generation, whereas delays imposed by post-translational modifications (PTMs) are important for determining the period (tau) of the rhythms (tau refers to the period of a rhythm and is the length, in time, of one complete cycle). A diurnal rhythm is synchronized with the day/night cycle, while the ultradian and infradian rhythms have a period shorter and longer than 24 hours, respectively. Disruptions in the circadian rhythms contribute to the pathology of cardiovascular diseases, cancer, metabolic syndrome and aging. A transcription/translation feedback loop (TTFL) forms the core of the molecular circadian clock mechanism. Transcription factors, CLOCK or NPAS2 and BMAL1 or BMAL2, form the positive limb of the feedback loop, act in the form of a heterodimer and activate the transcription of core clock genes and clock-controlled genes (involved in key metabolic processes), harboring E-box elements (5'-CACGTG-3') within their promoters. The core clock genes: PER1/2/3 and CRY1/2 which are transcriptional repressors form the negative limb of the feedback loop and interact with the CLOCK|NPAS2-BMAL1|BMAL2 heterodimer inhibiting its activity and thereby negatively regulating their own expression. This heterodimer also activates nuclear receptors NR1D1/2 and RORA/B/G, which form a second feedback loop and which activate and repress BMAL1 transcription, respectively. PER1 and PER2 proteins transport CRY1 and CRY2 into the nucleus with appropriate circadian timing, but also contribute directly to repression of clock-controlled target genes through interaction with several classes of RNA-binding proteins, helicases and others transcriptional repressors. PER appears to regulate circadian control of transcription by at least three different modes. First, interacts directly with the CLOCK-BMAL1 at the tail end of the nascent transcript peak to recruit complexes containing the SIN3-HDAC that remodel chromatin to repress transcription. Second, brings H3K9 methyltransferases such as SUV39H1 and SUV39H2 to the E-box elements of the circadian target genes, like PER2 itself or PER1. The recruitment of each repressive modifier to the DNA seems to be very precisely temporally orchestrated by the large PER complex, the deacetylases acting before than the methyltransferases. Additionally, large PER complexes are also recruited to the target genes 3' termination site through interactions with RNA-binding proteins and helicases that may play a role in transcription termination to regulate transcription independently of CLOCK-BMAL1 interactions. Recruitment of large PER complexes to the elongating polymerase at PER and CRY termination sites inhibited SETX action, impeding RNA polymerase II release and thereby repressing transcriptional reinitiation. May propagate clock information to metabolic pathways via the interaction with nuclear receptors. Coactivator of PPARA and corepressor of NR1D1, binds rhythmically at the promoter of nuclear receptors target genes like BMAL1 or G6PC1. Directly and specifically represses PPARG proadipogenic activity by blocking PPARG recruitment to target promoters and thereby transcriptional activation. Required for fatty acid and lipid metabolism, is involved as well in the regulation of circulating insulin levels. Plays an important role in the maintenance of cardiovascular functions through the regulation of NO and vasodilatatory prostaglandins production in aortas. Controls circadian glutamate uptake in synaptic vesicles through the regulation of VGLUT1 expression. May also be involved in the regulation of inflammatory processes. Represses the CLOCK-BMAL1 induced transcription of BHLHE40/DEC1 and ATF4. Negatively regulates the formation of the TIMELESS-CRY1 complex by competing with TIMELESS for binding to CRY1. This is Period circadian protein homolog 2 (Per2) from Mus musculus (Mouse).